A 131-amino-acid polypeptide reads, in one-letter code: Methylglyoxal synthase (131 aa).

Positions 1-131 constitute an MGS-like domain; the sequence is MKIALIAHDK…GDLDYRKLRK (131 aa). Substrate contacts are provided by residues His8, Lys12, 34–37, and 54–55; these read TGTT and SG. Residue Asp60 is the Proton donor/acceptor of the active site. His87 contributes to the substrate binding site.

The protein belongs to the methylglyoxal synthase family.

The catalysed reaction is dihydroxyacetone phosphate = methylglyoxal + phosphate. Its function is as follows. Catalyzes the formation of methylglyoxal from dihydroxyacetone phosphate. The polypeptide is Methylglyoxal synthase (Bacillus cereus (strain ATCC 10987 / NRS 248)).